A 408-amino-acid chain; its full sequence is MLSEKTIRIVKEITPLVAANAETITRRFYERMFEANPEVKAFFNQAHQHSGGQQKALAGAICAYFTHIDNPAVLMPAVELIAQKHVSLGIKPEHYPIVGSNLLAAIGDVMGDAATPEIVEAVSEAYGFLADIFIGREGAIYEEQASMPGGWNGTRTFVVTKKVRESEIVTSFYLKPEDEGPLPPFKPGQYITVHMDHPHTPTSPRNYSLSDCASQPHYRISVKREERLVPDAPDGLISNHLHDGIEEGHRIELGPPCGEFTVDPATIAKPIVLIAGGIGVTPLLSMAKSIVHANPNAELHFIQAARNSKVHAFADELRRLAQAGPNVHTKVIYDSPLPGDVEEGKCDEAGFVTENQIRESTPFTDADFYFCGPKPFMKNVHSCLRELGVDEHRVRYEFFGPKEELVAV.

In terms of domain architecture, Globin spans 1–138 (MLSEKTIRIV…LADIFIGREG (138 aa)). Histidine 85 contacts heme b. Residues tyrosine 95 and glutamate 137 each act as charge relay system in the active site. The interval 149–408 (GGWNGTRTFV…FGPKEELVAV (260 aa)) is reductase. In terms of domain architecture, FAD-binding FR-type spans 152–263 (NGTRTFVVTK…GPPCGEFTVD (112 aa)). FAD-binding positions include tyrosine 190 and 205-208 (RNYS). Residue 277 to 282 (GIGVTP) participates in NADP(+) binding. Residue 398-401 (FFGP) participates in FAD binding.

It belongs to the globin family. Two-domain flavohemoproteins subfamily. In the C-terminal section; belongs to the flavoprotein pyridine nucleotide cytochrome reductase family. The cofactor is heme b. FAD serves as cofactor.

The enzyme catalyses 2 nitric oxide + NADPH + 2 O2 = 2 nitrate + NADP(+) + H(+). It carries out the reaction 2 nitric oxide + NADH + 2 O2 = 2 nitrate + NAD(+) + H(+). The protein is Flavohemoprotein of Rhodopirellula baltica (strain DSM 10527 / NCIMB 13988 / SH1).